The following is an 86-amino-acid chain: RNA-binding protein Hfq (86 aa).

In terms of domain architecture, Sm spans 9 to 68 (DPYLNTLRKEKVGVSIYLVNGIKLQGTIESFDQFVILLKNTVSQMVYKHAISTVVPVRPI).

This sequence belongs to the Hfq family. Homohexamer.

RNA chaperone that binds small regulatory RNA (sRNAs) and mRNAs to facilitate mRNA translational regulation in response to envelope stress, environmental stress and changes in metabolite concentrations. Also binds with high specificity to tRNAs. In Pseudomonas fluorescens (strain ATCC BAA-477 / NRRL B-23932 / Pf-5), this protein is RNA-binding protein Hfq.